Consider the following 1433-residue polypeptide: MDSDLMDFFDFSKQFKRGTALKGCITGDPNALTTESRDSKPIKREKIGTDYVNEIVEKEKQLMNKLVDGQSVAKRNRTLDELDSDDEEENMQEQPSVRSDEAYYEKYRFDLNRNKNLPIYAQREQIMKAIRENPVVILKGETGCGKTTQVPQYILDEACKRREFCNIVVTQPRRIAAISIANRVCQERQWQPGTVCSYQVGLHRQSNVEDTRLLYCTTGVLLNNLIRLKTLTHYTHIVLDEVHERDQDMDFLLIVVRRLLALNSRHVKVILMSATIDTREFSKYFATSSAFPPVVTASHGRKYPLVKYYRDQLKNIHWKDEPQERAPGIGPEGYADAIKILLVIDNMERKAVGQSLQSYEEAKRTGSVLIFLPGINEIDTMADHITSVMEENPTMIITIVRCHSLMSPDSQEEVFQPPLPGHRKIILTTNIAESSITVPDVSYVIDFCLTKVLHTDTATNYSCLRLEWASKVNCRQRAGRVGRLRSGRVYRMVSKAFYLEEMKEFGIPEMLRSPLQNSVLKAKELEMGRPSEILALAMSPPNLSDIQNTVLLLKEVGALYTTVDGVYEELDGDLTYWGTIMSRFPLDVRLSRLIILGYVFNCLEEVIVIAAGMTVRSLYLTGKRRQVNDAFWMHYIFADGSGSDMVAIWRVYRIYLNMCQDRMLKESAEQWARRFNVNLRSLKEMHLMVQELRQRCASVNLQPLPYGTCQMWDDREKSIILKVIIAGAFYPNYFMRSNKSNADYDRSLFQSICGNDPCRTVFFTHYEPRYMGELYTRRIKELFLEVKIPPENMDVTFLHGSEKVFVTFKSDDEDMDTAKVVQVPGRVMTEVYKAVRMRLENQNRPLRVMDQNSALRYVQDRKIGVVTEGTWFPPSNQWNVELLTLPSVFAKNITGLVTYIVSCGKFYFQPRALAESIASMSEIFNGPQQLSCHVRNASAVTKGLQLLAKRGHLFQRAVVLRIETQTNGHPRFRVRFIDYGDMAVLPMDQLRLMPHELKRDFDQLPPRMFECRLALVQPSMVTSSYNRWPKAANDMLISVAQCGRLELEVYSLVNNVAAVLIHMRDGVLNDRLVERQLARRADEDYMSRKDHDLRIRKQEAKRNISVAEQERINEEYLRFAQLPKDMDLEPPPLDKCNLSIRLRGPFSPLESSMNSMLRIGMYKSVTIDKDSVNAVLLDTDPQDRHDQMVVAASVTETDNTERLTARGTTLMPNIHGFGALMAMLFCPTMQIKCNKDRTKYVCLLAGLGFDPETLEPYFAEHDMVINLDVTILRDDIRIINQMRYNIDSMFYNFDANEMPSVGTEDRVVIFNQLRSLLTRLLGKDRSFIERHVSNSEYLWEDMSDLEPPSEPYGKRAIFPMHSSYDLENDNLSNLLELQANCKQLYDWRNFEGNLQTQVCRLCNESLESVAELRLHLLTQLHRDREKQVGYKQQ.

Residues 76–98 (NRTLDELDSDDEEENMQEQPSVR) form a disordered region. The segment covering 81 to 91 (ELDSDDEEENM) has biased composition (acidic residues). The Helicase ATP-binding domain maps to 127 to 294 (MKAIRENPVV…FATSSAFPPV (168 aa)). 140–147 (GETGCGKT) contacts ATP. The DEAH box signature appears at 240-243 (DEVH). Positions 354–526 (QSLQSYEEAK…NSVLKAKELE (173 aa)) constitute a Helicase C-terminal domain. The 64-residue stretch at 937-1000 (ASAVTKGLQL…RLMPHELKRD (64 aa)) folds into the Tudor domain.

It belongs to the DEAD box helicase family. DEAH subfamily.

The protein localises to the cytoplasm. The catalysed reaction is ATP + H2O = ADP + phosphate + H(+). In terms of biological role, probable ATP-binding RNA helicase which plays a central role during spermatogenesis and oogenesis by repressing transposable elements and preventing their mobilization, which is essential for the germline integrity. Acts via the piRNA metabolic process, which mediates the repression of transposable elements during meiosis by forming complexes composed of piRNAs and Piwi and govern the methylation and subsequent repression of transposons. Involved in the repression of LTR retrotransposon copia. Also involved in telomere regulation by repressing specialized telomeric retroelements HeT-A, TAHRE, and TART; Drosophila telomeres being maintained by transposition of specialized telomeric retroelements. Involved in telomeric trans-silencing, a repression mechanism by which a transposon or a transgene inserted in subtelomeric heterochromatin has the capacity to repress in trans in the female germline, a homologous transposon, or transgene located in euchromatin. Involved in the repression of testis-expressed Stellate genes by the homologous Su(Ste) repeats. Required for anteroposterior and dorsoventral axis formation during oogenesis. This Drosophila virilis (Fruit fly) protein is Probable ATP-dependent RNA helicase spindle-E (spn-E).